A 73-amino-acid polypeptide reads, in one-letter code: Crustacean hyperglycemic hormone (73 aa).

Disulfide bonds link C7/C43, C23/C39, and C26/C52. S73 bears the Serine amide mark.

In terms of tissue distribution, produced by the medulla terminalis X-organ in the eyestalks and transported to the sinus gland where they are stored and released. Found also in the brain; in the neuroendocrine structures of the protocerebrum.

Its subcellular location is the secreted. Its function is as follows. Hormone found in the sinus gland of isopods and decapods which controls the blood sugar level. Has a secretagogue action over the amylase released from the midgut gland. May act as a stress hormone and may be involved in the control of molting and reproduction. This Armadillidium vulgare (Pillbug) protein is Crustacean hyperglycemic hormone.